The sequence spans 173 residues: Shikimate kinase (173 aa).

16–21 contacts ATP; that stretch reads GSGKTT. Thr-20 contacts Mg(2+). Positions 38, 62, and 83 each coordinate substrate. Residue Arg-120 coordinates ATP. Arg-139 is a binding site for substrate. Arg-156 is a binding site for ATP.

This sequence belongs to the shikimate kinase family. As to quaternary structure, monomer. The cofactor is Mg(2+).

The protein localises to the cytoplasm. The catalysed reaction is shikimate + ATP = 3-phosphoshikimate + ADP + H(+). It participates in metabolic intermediate biosynthesis; chorismate biosynthesis; chorismate from D-erythrose 4-phosphate and phosphoenolpyruvate: step 5/7. Catalyzes the specific phosphorylation of the 3-hydroxyl group of shikimic acid using ATP as a cosubstrate. This chain is Shikimate kinase, found in Corynebacterium diphtheriae (strain ATCC 700971 / NCTC 13129 / Biotype gravis).